A 314-amino-acid polypeptide reads, in one-letter code: tRNA pseudouridine synthase B (314 aa).

His43 provides a ligand contact to substrate. Residue Asp48 is the Nucleophile of the active site. The substrate site is built by Tyr76, Tyr179, and Leu200.

Belongs to the pseudouridine synthase TruB family. Type 1 subfamily.

It catalyses the reaction uridine(55) in tRNA = pseudouridine(55) in tRNA. Functionally, responsible for synthesis of pseudouridine from uracil-55 in the psi GC loop of transfer RNAs. The protein is tRNA pseudouridine synthase B of Salmonella paratyphi B (strain ATCC BAA-1250 / SPB7).